A 336-amino-acid chain; its full sequence is Cytochrome P450 monooxygenase lcsN (336 aa).

Cysteine 271 serves as a coordination point for heme.

Belongs to the cytochrome P450 family. The cofactor is heme.

It participates in secondary metabolite biosynthesis. In terms of biological role, cytochrome P450 monooxygenase; part of the gene cluster that mediates the biosynthesis of the lipopeptide antibiotics leucinostatins that show extensive biological activities, including antimalarial, antiviral, antibacterial, antifungal, and antitumor activities, as well as phytotoxic. Leucinostatin A contains nine amino acid residues, including the unusual amino acid 4-methyl-L-proline (MePro), 2-amino-6-hydroxy-4-methyl-8-oxodecanoic acid (AHyMeOA), 3-hydroxyleucine (HyLeu), alpha-aminoisobutyric acid (AIB), beta-Ala, a 4-methylhex-2-enoic acid at the N-terminus as well as a N1,N1-dimethylpropane-1,2-diamine (DPD) at the C-terminus. The biosynthesis of leucinostatins is probably initiated with the assembly of 4-methylhex-2-enoic acid by a reducing PKS. Two reducing polyketide synthases, lcsB and lcsC, have been identified in the cluster and it is not clear which is the one that assembles 4-methylhex-2-enoic acid since both contain KS, AT, DH, cMT, ER, KR and ACP domains. The polyketide residue might be transferred to the NRPS lcsA, mediated by two additional enzymes, the acyl-CoA ligase lcsD and the thioesterase lcsE. The linear polyketide carboxylic acid, which is released from PKS, is converted to a CoA thioester by lcsD, and then lcsE hydrolyzes the thiol bond and shuttles the polyketide intermediate to lcsA. The C domain of the first module catalyzed the condensation of 4-methylhex-2-enoic acid and MePro carried by domain A1, followed by successive condensations of nine amino acids to trigger the elongation of the linear peptide. A5 and A6 domains of lcsA are proposed to incorporate leucine, A2 AHyMeOA, and A3 incorporates HyLeu. A4, A7 and A8 incorporate AIB. The AHyMeOA in leucinostatin A activated by the A2 might be produced by the second PKS (lcsB or lcsC) present within the cluster. The MePro is probably produced via leucine cyclization and may originate from a separate pathway, independent of the cluster. Another nonproteinogenic amino acid, beta-Ala, could be produced by an aspartic acid decarboxylase also localized outside of the cluster. Two candidates are VFPBJ_01400 and VFPBJ_10476. The final peptide scaffold may be released by the NAD(P)H-dependent thioester reductase (TE) at the C-terminal region of lcsA. Transamination of the lcsA product by the transaminase lcsP may produce DPD at the C-terminus. Further hydroxylation steps performed alternatively by the cytochrome P450 monooxygenases lcsI, lcsK and lcsN then yield the non-methylated leucinostatins precursor. It is also possible that leucines can be hydroxylated prior to their incorporation into the peptide. Varying extents of methylation then lead to the formation of leucinostatins A and B. The chain is Cytochrome P450 monooxygenase lcsN from Purpureocillium lilacinum (Paecilomyces lilacinus).